The chain runs to 119 residues: Large ribosomal subunit protein bL19 (119 aa).

The protein belongs to the bacterial ribosomal protein bL19 family.

In terms of biological role, this protein is located at the 30S-50S ribosomal subunit interface and may play a role in the structure and function of the aminoacyl-tRNA binding site. The sequence is that of Large ribosomal subunit protein bL19 from Psychromonas ingrahamii (strain DSM 17664 / CCUG 51855 / 37).